Here is a 194-residue protein sequence, read N- to C-terminus: NADH-quinone oxidoreductase subunit B (194 aa).

Positions 72, 73, 137, and 167 each coordinate [4Fe-4S] cluster.

The protein belongs to the complex I 20 kDa subunit family. In terms of assembly, NDH-1 is composed of 14 different subunits. Subunits NuoB, C, D, E, F, and G constitute the peripheral sector of the complex. [4Fe-4S] cluster serves as cofactor.

It is found in the cell inner membrane. It carries out the reaction a quinone + NADH + 5 H(+)(in) = a quinol + NAD(+) + 4 H(+)(out). Its function is as follows. NDH-1 shuttles electrons from NADH, via FMN and iron-sulfur (Fe-S) centers, to quinones in the respiratory chain. Couples the redox reaction to proton translocation (for every two electrons transferred, four hydrogen ions are translocated across the cytoplasmic membrane), and thus conserves the redox energy in a proton gradient. This is NADH-quinone oxidoreductase subunit B from Granulibacter bethesdensis (strain ATCC BAA-1260 / CGDNIH1).